The sequence spans 286 residues: MKIIIPATSANIGPGFDSVGVALSKYLTIEVFEETDEWVIEHNLEHVPSDKNNLLIKTALKIEKGLQPHRIRMISDIPLARGLGSSSSVIVAGIELANQLAGLNMTADEKLLKATEIEGHPDNVAPAIFGNLVISSYVNKRVQAVVTEFPEASFVAFIPNYPLRTVESRGVLPSQMGYKKAVAASAIANVAVASLMAGDLEKAGKAIQSDMFHEPFRQLLVKEFCPIKQTAQELGAYATYLSGAGPTVMVLAPKDREDAIVLALEELNLDGTVHRLQVDTKGIAIV.

78–88 (PLARGLGSSSS) provides a ligand contact to ATP.

The protein belongs to the GHMP kinase family. Homoserine kinase subfamily.

The protein localises to the cytoplasm. The enzyme catalyses L-homoserine + ATP = O-phospho-L-homoserine + ADP + H(+). Its pathway is amino-acid biosynthesis; L-threonine biosynthesis; L-threonine from L-aspartate: step 4/5. Catalyzes the ATP-dependent phosphorylation of L-homoserine to L-homoserine phosphate. The polypeptide is Homoserine kinase (Streptococcus suis (strain 98HAH33)).